The following is a 421-amino-acid chain: Ribulose bisphosphate carboxylase large chain (421 aa).

Residues Asn68 and Thr118 each coordinate substrate. The active-site Proton acceptor is the Lys120. Lys122 is a substrate binding site. Positions 146, 148, and 149 each coordinate Mg(2+). Lys146 carries the post-translational modification N6-carboxylysine. Catalysis depends on His239, which acts as the Proton acceptor. 3 residues coordinate substrate: Arg240, His272, and Ser324.

The protein belongs to the RuBisCO large chain family. Type I subfamily. As to quaternary structure, heterohexadecamer of 8 large chains and 8 small chains; disulfide-linked. The disulfide link is formed within the large subunit homodimers. It depends on Mg(2+) as a cofactor. In terms of processing, the disulfide bond which can form in the large chain dimeric partners within the hexadecamer appears to be associated with oxidative stress and protein turnover.

The protein localises to the plastid. It is found in the chloroplast. The enzyme catalyses 2 (2R)-3-phosphoglycerate + 2 H(+) = D-ribulose 1,5-bisphosphate + CO2 + H2O. The catalysed reaction is D-ribulose 1,5-bisphosphate + O2 = 2-phosphoglycolate + (2R)-3-phosphoglycerate + 2 H(+). Its function is as follows. RuBisCO catalyzes two reactions: the carboxylation of D-ribulose 1,5-bisphosphate, the primary event in carbon dioxide fixation, as well as the oxidative fragmentation of the pentose substrate in the photorespiration process. Both reactions occur simultaneously and in competition at the same active site. The chain is Ribulose bisphosphate carboxylase large chain (rbcL) from Aegilops crassa (Persian goatgrass).